A 231-amino-acid polypeptide reads, in one-letter code: NADH-ubiquinone oxidoreductase chain 4 (231 aa).

6 helical membrane-spanning segments follow: residues 1–21 (PIAGSMVLAAILLKLGGYGII), 34–54 (MFLPFIVLALWGATLANLTCL), 62–84 (LIAYSSISHMGLVVATIIIQTPW), 89–111 (AMALMIAHGFTSSALFCLANTTY), 128–148 (ILPMATTWWLLANLMNIAIPP), and 169–189 (TIIMLGLSMLITASYSLHMFL).

The protein belongs to the complex I subunit 4 family.

The protein resides in the mitochondrion membrane. It carries out the reaction a ubiquinone + NADH + 5 H(+)(in) = a ubiquinol + NAD(+) + 4 H(+)(out). In terms of biological role, core subunit of the mitochondrial membrane respiratory chain NADH dehydrogenase (Complex I) that is believed to belong to the minimal assembly required for catalysis. Complex I functions in the transfer of electrons from NADH to the respiratory chain. The immediate electron acceptor for the enzyme is believed to be ubiquinone. This is NADH-ubiquinone oxidoreductase chain 4 (MT-ND4) from Bothrops erythromelas (Caatinga lance head).